The chain runs to 639 residues: 1-deoxy-D-xylulose-5-phosphate synthase 1 (639 aa).

Thiamine diphosphate contacts are provided by residues His-79 and 120 to 122; that span reads AHS. Residue Asp-155 participates in Mg(2+) binding. Thiamine diphosphate-binding positions include 156 to 157, Asn-184, Tyr-293, and Glu-373; that span reads GA. Asn-184 serves as a coordination point for Mg(2+).

This sequence belongs to the transketolase family. DXPS subfamily. In terms of assembly, homodimer. It depends on Mg(2+) as a cofactor. Thiamine diphosphate is required as a cofactor.

It carries out the reaction D-glyceraldehyde 3-phosphate + pyruvate + H(+) = 1-deoxy-D-xylulose 5-phosphate + CO2. It functions in the pathway metabolic intermediate biosynthesis; 1-deoxy-D-xylulose 5-phosphate biosynthesis; 1-deoxy-D-xylulose 5-phosphate from D-glyceraldehyde 3-phosphate and pyruvate: step 1/1. Catalyzes the acyloin condensation reaction between C atoms 2 and 3 of pyruvate and glyceraldehyde 3-phosphate to yield 1-deoxy-D-xylulose-5-phosphate (DXP). This Jannaschia sp. (strain CCS1) protein is 1-deoxy-D-xylulose-5-phosphate synthase 1.